The following is a 246-amino-acid chain: MNNNTTAPTYTLRGLQLIGWRDMQHALDYLFADGQLKQGTLVAINAEKILTIEDNAEVRELINAAEFKYADGISVVRSVRKKYPQAQVSRVAGADLWEELMARAGKEGTPVFLVGGKPEVLAQTEAKLRNQWNVNIVGSQDGYFKPEQRQALFERIHASGAQIVTVAMGSPKQEIFMRDCRLVHPDALYMGVGGTYDVFTGHVKRAPKIWQTLGLEWLYRLLSQPSRIKRQLRLLRYLRWHYTGNL.

This sequence belongs to the glycosyltransferase 26 family.

It catalyses the reaction UDP-N-acetyl-alpha-D-mannosaminouronate + N-acetyl-alpha-D-glucosaminyl-di-trans,octa-cis-undecaprenyl diphosphate = beta-D-ManNAcA-(1-&gt;4)-alpha-D-GlcNAc-di-trans,octa-cis-undecaprenyl diphosphate + UDP + H(+). The protein operates within bacterial outer membrane biogenesis; enterobacterial common antigen biosynthesis. Functionally, catalyzes the synthesis of Und-PP-GlcNAc-ManNAcA (Lipid II), the second lipid-linked intermediate involved in enterobacterial common antigen (ECA) synthesis. The polypeptide is UDP-N-acetyl-D-mannosaminuronic acid transferase (Escherichia coli O127:H6 (strain E2348/69 / EPEC)).